Here is a 396-residue protein sequence, read N- to C-terminus: L-lactate dehydrogenase (396 aa).

In terms of domain architecture, FMN hydroxy acid dehydrogenase spans 1–380 (MIISAASDYR…TQDSLVQELS (380 aa)). Tyr-24 contacts substrate. FMN contacts are provided by Ser-106 and Gln-127. Tyr-129 is a binding site for substrate. FMN is bound at residue Thr-155. Arg-164 lines the substrate pocket. Position 251 (Lys-251) interacts with FMN. The active-site Proton acceptor is the His-275. Residue Arg-278 coordinates substrate. 306–330 (DSGIRNGLDVVRMIALGADTVLLGR) serves as a coordination point for FMN.

It belongs to the FMN-dependent alpha-hydroxy acid dehydrogenase family. The cofactor is FMN.

The protein localises to the cell inner membrane. It catalyses the reaction (S)-lactate + A = pyruvate + AH2. Catalyzes the conversion of L-lactate to pyruvate. Is coupled to the respiratory chain. The sequence is that of L-lactate dehydrogenase from Escherichia coli (strain SMS-3-5 / SECEC).